Here is a 316-residue protein sequence, read N- to C-terminus: SFAYSGNSESVWTGENITSIWKTILINETGSYCVAARPMTMDGAEFNLDLMGYSVSEDQINNDEIGIWNYISVAEMGGVLLFLSYWIWTCLHFSKIIFPAQKVICLYIFLFALNQTLQECIEEYVFSSECIKYRQFYSVYEIIDFLRTNFYRLFVIYCALGFGITRTVPKYLMIKGISIVIALCSVYWISLYKDVYVVSEIFDMIQYEVSPAIWVYSICHLLKQCTSVTTYENASKARFFRRMLNAFIFIFCASPMLHYLSNIIFGNFDYRLSVIIGDLFTFMEKIAFPCYIMFPTHNEALAYNRNVAEEAQEKMI.

The Cytoplasmic segment spans residues 1–70 (SFAYSGNSES…NNDEIGIWNY (70 aa)). Residues 71–91 (ISVAEMGGVLLFLSYWIWTCL) traverse the membrane as a helical segment. A topological domain (lumenal) is located at residue His92. The helical transmembrane segment at 93-113 (FSKIIFPAQKVICLYIFLFAL) threads the bilayer. Topologically, residues 114–170 (NQTLQECIEEYVFSSECIKYRQFYSVYEIIDFLRTNFYRLFVIYCALGFGITRTVPK) are cytoplasmic. The chain crosses the membrane as a helical span at residues 171–191 (YLMIKGISIVIALCSVYWISL). Residues 192-194 (YKD) lie on the Lumenal side of the membrane. The chain crosses the membrane as a helical span at residues 195 to 215 (VYVVSEIFDMIQYEVSPAIWV). Over 216-245 (YSICHLLKQCTSVTTYENASKARFFRRMLN) the chain is Cytoplasmic. A helical membrane pass occupies residues 246-266 (AFIFIFCASPMLHYLSNIIFG). The Lumenal segment spans residues 267 to 316 (NFDYRLSVIIGDLFTFMEKIAFPCYIMFPTHNEALAYNRNVAEEAQEKMI).

Belongs to the UPF0742 family.

It localises to the endoplasmic reticulum. The protein localises to the membrane. This is an uncharacterized protein from Schizosaccharomyces pombe (strain 972 / ATCC 24843) (Fission yeast).